The chain runs to 157 residues: Nascent polypeptide-associated complex subunit beta-1 (157 aa).

Disordered regions lie at residues 19–42 (KVGG…KDDT) and 126–157 (EKHE…ADVE). An NAC-A/B domain is found at 38–103 (NKDDTKLQSQ…PQEKNLQDLF (66 aa)). Over residues 126-142 (EKHEAKAPADAEKKDEA) the composition is skewed to basic and acidic residues. Phosphothreonine is present on Thr-151.

This sequence belongs to the NAC-beta family. Part of the nascent polypeptide-associated complex (NAC), consisting of EGD2 and either EGD1 or BTT1. NAC associates with ribosomes via EGD1 or BTT1, and with the CCR4-NOT complex.

It is found in the cytoplasm. It localises to the nucleus. Functionally, component of the nascent polypeptide-associated complex (NAC), a dynamic component of the ribosomal exit tunnel, protecting the emerging polypeptides from interaction with other cytoplasmic proteins to ensure appropriate nascent protein targeting. The NAC complex also promotes mitochondrial protein import by enhancing productive ribosome interactions with the outer mitochondrial membrane and blocks the inappropriate interaction of ribosomes translating non-secretory nascent polypeptides with translocation sites in the membrane of the endoplasmic reticulum. EGD1 may act as a transcription factor that exert a negative effect on the expression of several genes that are transcribed by RNA polymerase II. In Saccharomyces cerevisiae (strain YJM789) (Baker's yeast), this protein is Nascent polypeptide-associated complex subunit beta-1 (EGD1).